Here is a 254-residue protein sequence, read N- to C-terminus: Tumor necrosis factor ligand superfamily member 9 (254 aa).

The Cytoplasmic segment spans residues 1–28; the sequence is MEYASDASLDPEAPWPPAPRARACRVLP. The chain crosses the membrane as a helical; Signal-anchor for type II membrane protein span at residues 29–49; that stretch reads WALVAGLLLLLLLAAACAVFL. The Extracellular segment spans residues 50 to 254; that stretch reads ACPWAVSGAR…PAGLPSPRSE (205 aa). A THD domain is found at 91-240; sequence MFAQLVAQNV…GATVLGLFRV (150 aa).

The protein belongs to the tumor necrosis factor family. In terms of assembly, homotrimer. Expressed in brain, placenta, lung, skeletal muscle and kidney.

Its subcellular location is the membrane. In terms of biological role, cytokine that binds to TNFRSF9. Induces the proliferation of activated peripheral blood T-cells. May have a role in activation-induced cell death (AICD). May play a role in cognate interactions between T-cells and B-cells/macrophages. This is Tumor necrosis factor ligand superfamily member 9 (TNFSF9) from Homo sapiens (Human).